A 546-amino-acid polypeptide reads, in one-letter code: Chaperonin GroEL 2 (546 aa).

Residues 29–32, 86–90, Gly-418, 482–484, and Asp-498 each bind ATP; these read TLGP, DGTTT, and NAA.

Belongs to the chaperonin (HSP60) family. As to quaternary structure, forms a cylinder of 14 subunits composed of two heptameric rings stacked back-to-back. Interacts with the co-chaperonin GroES.

The protein localises to the cytoplasm. It catalyses the reaction ATP + H2O + a folded polypeptide = ADP + phosphate + an unfolded polypeptide.. Its function is as follows. Together with its co-chaperonin GroES, plays an essential role in assisting protein folding. The GroEL-GroES system forms a nano-cage that allows encapsulation of the non-native substrate proteins and provides a physical environment optimized to promote and accelerate protein folding. The chain is Chaperonin GroEL 2 from Corynebacterium diphtheriae (strain ATCC 700971 / NCTC 13129 / Biotype gravis).